A 378-amino-acid chain; its full sequence is tRNA-specific 2-thiouridylase MnmA (378 aa).

Residues G9–S16 and M35 each bind ATP. Residues N94–D96 form an interaction with target base in tRNA region. The Nucleophile role is filled by C99. Cysteines 99 and 195 form a disulfide. Position 123 (G123) interacts with ATP. Residues K145–Q147 form an interaction with tRNA region. Catalysis depends on C195, which acts as the Cysteine persulfide intermediate. Residues R307–Y308 are interaction with tRNA.

Belongs to the MnmA/TRMU family.

Its subcellular location is the cytoplasm. The catalysed reaction is S-sulfanyl-L-cysteinyl-[protein] + uridine(34) in tRNA + AH2 + ATP = 2-thiouridine(34) in tRNA + L-cysteinyl-[protein] + A + AMP + diphosphate + H(+). In terms of biological role, catalyzes the 2-thiolation of uridine at the wobble position (U34) of tRNA, leading to the formation of s(2)U34. This Xanthomonas oryzae pv. oryzae (strain PXO99A) protein is tRNA-specific 2-thiouridylase MnmA.